A 168-amino-acid chain; its full sequence is Gremlin-2 (168 aa).

The N-terminal stretch at 1 to 21 (MFWKLSLSLFLVAVLVKVAEA) is a signal peptide. N-linked (GlcNAc...) asparagine glycosylation is present at asparagine 40. 4 disulfide bridges follow: cysteine 73–cysteine 123, cysteine 87–cysteine 137, cysteine 97–cysteine 155, and cysteine 101–cysteine 157. Positions 73–163 (CKTQPLRQTV…QCRCMSVNLS (91 aa)) constitute a CTCK domain. Asparagine 161 carries an N-linked (GlcNAc...) asparagine glycan.

The protein belongs to the DAN family. Homodimer. Interacts with BMP2, BMP4 and BMP7, but has lower affinity for BMP7 than for BMP2 and BMP4. Binds heparin; this impairs the interaction with BMP2. Post-translationally, N-glycosylated.

It localises to the secreted. Functionally, cytokine that inhibits the activity of BMP2 and BMP4 in a dose-dependent manner, and thereby modulates signaling by BMP family members. Contributes to the regulation of embryonic morphogenesis via BMP family members. Antagonizes BMP4-induced suppression of progesterone production in granulosa cells. The chain is Gremlin-2 (GREM2) from Homo sapiens (Human).